The sequence spans 341 residues: uncharacterized protein (341 aa).

WD repeat units follow at residues 19 to 59 (SLGS…QVHT), 106 to 145 (GHTD…RCLG), 252 to 293 (PFSN…HHKG), and 303 to 341 (VSQS…ALTS).

It localises to the cytoplasm. The protein localises to the nucleus. This is an uncharacterized protein from Schizosaccharomyces pombe (strain 972 / ATCC 24843) (Fission yeast).